We begin with the raw amino-acid sequence, 415 residues long: MLFWTAFSMALSLRLALARSSIERGSTASDPQGDLLFLLDSSASVSHYEFSRVREFVGQLVATMSFGPGALRASLVHVGSQPHTEFTFDQYSSGQAIQDAIRVAPQRMGDTNTGLALAYAKEQLFAEEAGARPGVPKVLVWVTDGGSSDPVGPPMQELKDLGVTIFIVSTGRGNLLELLAAASAPAEKHLHFVDVDDLPIIARELRGSITDAMQPQQLHASEVLSSGFRLSWPPLLTADSGYYVLELVPSGKLATTRRQQLPGNATSWTWTDLDPDTDYEVSLLPESNVHLLRPQHVRVRTLQEEAGPERIVISHARPRSLRVSWAPALGPDSALGYHVQLGPLQGGSLERVEVPAGQNSTTVQGLTPCTTYLVTVTAAFRSGRQRALSAKACTASGARTRAPQSMRPEAGPREP.

The first 18 residues, 1 to 18 (MLFWTAFSMALSLRLALA), serve as a signal peptide directing secretion. In terms of domain architecture, VWFA spans 34-209 (DLLFLLDSSA…IIARELRGSI (176 aa)). A phosphoserine mark is found at S74, S80, and S93. 2 Fibronectin type-III domains span residues 214–305 (QPQQ…LQEE) and 307–403 (GPER…TRAP). N264 is a glycosylation site (N-linked (GlcNAc...) asparagine). Cysteines 369 and 393 form a disulfide. Positions 391–415 (KACTASGARTRAPQSMRPEAGPREP) are disordered.

As to quaternary structure, homodimer or homomultimer; disulfide-linked. Interacts with HSPG2. In terms of processing, N-glycosylated. Expressed at high levels in the chondrocytes. Detected in the vasculature of neural tissues, in basement membrane structures of the peripheral nervous system, in the apical ectodermal ridge of developing limb buds, and in skeletal and cardiac muscle (at protein level).

It localises to the secreted. The protein resides in the extracellular space. It is found in the extracellular matrix. Its subcellular location is the basement membrane. Its function is as follows. Promotes matrix assembly. Involved in the organization of skeletal muscles and in the formation of neuromuscular junctions. The polypeptide is von Willebrand factor A domain-containing protein 1 (Vwa1) (Mus musculus (Mouse)).